The chain runs to 279 residues: Probable ribosomal RNA small subunit methyltransferase A (279 aa).

The S-adenosyl-L-methionine site is built by asparagine 23, leucine 25, glycine 50, glutamate 71, aspartate 95, and asparagine 110.

Belongs to the class I-like SAM-binding methyltransferase superfamily. rRNA adenine N(6)-methyltransferase family. RsmA subfamily.

The protein localises to the cytoplasm. Specifically dimethylates two adjacent adenosines in the loop of a conserved hairpin near the 3'-end of 16S rRNA in the 30S particle. May play a critical role in biogenesis of 30S subunits. The sequence is that of Probable ribosomal RNA small subunit methyltransferase A from Thermococcus kodakarensis (strain ATCC BAA-918 / JCM 12380 / KOD1) (Pyrococcus kodakaraensis (strain KOD1)).